Consider the following 828-residue polypeptide: Hapless 2 (828 aa).

The signal sequence occupies residues 1-32; that stretch reads MKNKLINLRSKHIYKLIIIIFFCIILKYYKWC. Residues 33–680 lie on the Extracellular side of the membrane; sequence DFKNKVFFIQ…INTVKTLIGK (648 aa). A disulfide bridge links Cys53 with Cys62. Asn74 carries an N-linked (GlcNAc...) asparagine glycan. 4 disulfide bridges follow: Cys142-Cys209, Cys170-Cys381, Cys172-Cys191, and Cys363-Cys388. The interval 174–191 is cd loop; involved in gamete fusion; it reads TYNYFKDDEFIKRAKLKC. N-linked (GlcNAc...) asparagine glycosylation is found at Asn233, Asn250, Asn264, Asn293, and Asn333. N-linked (GlcNAc...) asparagine glycosylation is found at Asn479, Asn516, Asn531, and Asn539. Cysteines 546 and 592 form a disulfide. Residues 681 to 701 form a helical membrane-spanning segment; the sequence is FAIIAILIILAPALIPLLPFF. Over 702–828 the chain is Cytoplasmic; that stretch reads LNFFFLFIST…SGKSKIPPLR (127 aa). The disordered stretch occupies residues 773–828; sequence RKNKKKFNKNNISSNIKHKKGGKKVKQKEPNRNSNHTSHEYADTSPSGKSKIPPLR. Residues 788 to 798 show a composition bias toward basic residues; that stretch reads IKHKKGGKKVK. Positions 799 to 814 are enriched in basic and acidic residues; sequence QKEPNRNSNHTSHEYA.

This sequence belongs to the HAP2/GCS1 family.

The protein resides in the cell membrane. During fertilization, required on male gametes for their fusion with female gametes, and for subsequent ookinete formation in the host. Thereby, required for mosquito-mediated transmission to other animals. Probably initiates the fusion of gamete cell membranes by inserting part of its extracellular domain into the cell membrane of a female gamete. This Plasmodium berghei (strain Anka) protein is Hapless 2.